The primary structure comprises 151 residues: Macrodomain Ter protein (151 aa).

This sequence belongs to the MatP family. As to quaternary structure, homodimer.

The protein resides in the cytoplasm. Functionally, required for spatial organization of the terminus region of the chromosome (Ter macrodomain) during the cell cycle. Prevents early segregation of duplicated Ter macrodomains during cell division. Binds specifically to matS, which is a 13 bp signature motif repeated within the Ter macrodomain. In Enterobacter sp. (strain 638), this protein is Macrodomain Ter protein.